Here is a 385-residue protein sequence, read N- to C-terminus: Cytochrome b (385 aa).

Transmembrane regions (helical) follow at residues 34 to 54 (FGSLTGLCLALQIISGLLLTM), 78 to 99 (WFIRNVHISGASLFFTCMFIHI), 114 to 134 (WYSGVILFILSMLTAFLGYVL), and 179 to 199 (FLVLHFLMPFSMIAVSLIHLV). Positions 84 and 98 each coordinate heme b. Residues histidine 183 and histidine 197 each contribute to the heme b site. A ubiquinone is bound at residue histidine 202. The next 4 helical transmembrane spans lie at 227 to 247 (FKDILGFSFLLTFLITFSLLL), 289 to 309 (LAGIIALVMSLSVLLLMPILI), 321 to 341 (LMQVTFWLMVCNFIFLSWLGA), and 348 to 368 (FILMSQISSFIYFFIFFVMFP).

This sequence belongs to the cytochrome b family. As to quaternary structure, the cytochrome bc1 complex contains 3 respiratory subunits (MT-CYB, CYC1 and UQCRFS1), 2 core proteins (UQCRC1 and UQCRC2) and probably 6 low-molecular weight proteins. Requires heme b as cofactor.

Its subcellular location is the mitochondrion inner membrane. In terms of biological role, component of the ubiquinol-cytochrome c reductase complex (complex III or cytochrome b-c1 complex) that is part of the mitochondrial respiratory chain. The b-c1 complex mediates electron transfer from ubiquinol to cytochrome c. Contributes to the generation of a proton gradient across the mitochondrial membrane that is then used for ATP synthesis. The polypeptide is Cytochrome b (MT-CYB) (Eptatretus burgeri (Inshore hagfish)).